The following is a 307-amino-acid chain: Ribosomal RNA small subunit methyltransferase H (307 aa).

S-adenosyl-L-methionine-binding positions include 34 to 36, Asp53, Leu88, Asp102, and Gln109; that span reads GGH.

It belongs to the methyltransferase superfamily. RsmH family.

The protein resides in the cytoplasm. It carries out the reaction cytidine(1402) in 16S rRNA + S-adenosyl-L-methionine = N(4)-methylcytidine(1402) in 16S rRNA + S-adenosyl-L-homocysteine + H(+). Its function is as follows. Specifically methylates the N4 position of cytidine in position 1402 (C1402) of 16S rRNA. The polypeptide is Ribosomal RNA small subunit methyltransferase H (Sulfurimonas denitrificans (strain ATCC 33889 / DSM 1251) (Thiomicrospira denitrificans (strain ATCC 33889 / DSM 1251))).